Reading from the N-terminus, the 172-residue chain is Translationally-controlled tumor protein homolog (172 aa).

In terms of domain architecture, TCTP spans M1–C172.

Belongs to the TCTP family. Expressed by the venom gland.

Its subcellular location is the secreted. In terms of biological role, venom protein that causes edema, enhances vascular permeability and is likely related to the inflammatory activity of the venom. The sequence is that of Translationally-controlled tumor protein homolog from Crotalus adamanteus (Eastern diamondback rattlesnake).